A 158-amino-acid chain; its full sequence is UPF0735 ACT domain-containing protein Bsph_3944 (158 aa).

Positions 80–155 constitute an ACT domain; sequence TVFLQLQDRK…FVESAEVISS (76 aa).

This sequence belongs to the UPF0735 family.

The protein is UPF0735 ACT domain-containing protein Bsph_3944 of Lysinibacillus sphaericus (strain C3-41).